Here is a 202-residue protein sequence, read N- to C-terminus: Small ribosomal subunit protein uS4c (202 aa).

Positions 90–154 constitute an S4 RNA-binding domain; the sequence is MRLDNILFRL…SQSIITKNLN (65 aa).

Belongs to the universal ribosomal protein uS4 family. In terms of assembly, part of the 30S ribosomal subunit. Contacts protein S5. The interaction surface between S4 and S5 is involved in control of translational fidelity.

The protein resides in the plastid. Its subcellular location is the chloroplast. One of the primary rRNA binding proteins, it binds directly to 16S rRNA where it nucleates assembly of the body of the 30S subunit. Functionally, with S5 and S12 plays an important role in translational accuracy. This Monoclea forsteri (Liverwort) protein is Small ribosomal subunit protein uS4c (rps4).